A 96-amino-acid polypeptide reads, in one-letter code: MMCSSKNLLLAALMSVLLLHFCSKSEASNFDCCLRYTERILHPSILVGFTQQLANEACDINAVVFYTRKKLAVCADPKKKWVKQVVHMLSQRVKRM.

The first 26 residues, 1-26, serve as a signal peptide directing secretion; sequence MMCSSKNLLLAALMSVLLLHFCSKSE. Intrachain disulfides connect C32-C58 and C33-C74.

The protein belongs to the intercrine beta (chemokine CC) family.

The protein localises to the secreted. In terms of biological role, acts as a ligand for C-C chemokine receptor CCR6. Signals through binding and activation of CCR6 and induces a strong chemotactic response and mobilization of intracellular calcium ions. The ligand-receptor pair CCL20-CCR6 is responsible for the chemotaxis of dendritic cells (DC), effector/memory T-cells and B-cells and plays an important role at skin and mucosal surfaces under homeostatic and inflammatory conditions, as well as in pathology, including cancer and autoimmune diseases. CCL20 acts as a chemotactic factor that attracts lymphocytes and, slightly, neutrophils, but not monocytes. Involved in the recruitment of both the pro-inflammatory IL17 producing helper T-cells (Th17) and the regulatory T-cells (Treg) to sites of inflammation. Required for optimal migration of thymic natural regulatory T cells (nTregs) and DN1 early thymocyte progenitor cells. Positively regulates sperm motility and chemotaxis via its binding to CCR6 which triggers Ca2+ mobilization in the sperm which is important for its motility. May be involved in formation and function of the mucosal lymphoid tissues by attracting lymphocytes and dendritic cells towards epithelial cells. The chain is C-C motif chemokine 20 (CCL20) from Bos taurus (Bovine).